The chain runs to 551 residues: Chaperonin GroEL (551 aa).

Residues 30-33, K51, 87-91, G415, 481-483, and D497 contribute to the ATP site; these read TLGP, DGTTT, and NAA.

It belongs to the chaperonin (HSP60) family. Forms a cylinder of 14 subunits composed of two heptameric rings stacked back-to-back. Interacts with the co-chaperonin GroES.

Its subcellular location is the cytoplasm. It carries out the reaction ATP + H2O + a folded polypeptide = ADP + phosphate + an unfolded polypeptide.. In terms of biological role, together with its co-chaperonin GroES, plays an essential role in assisting protein folding. The GroEL-GroES system forms a nano-cage that allows encapsulation of the non-native substrate proteins and provides a physical environment optimized to promote and accelerate protein folding. In Magnetococcus marinus (strain ATCC BAA-1437 / JCM 17883 / MC-1), this protein is Chaperonin GroEL.